The following is a 282-amino-acid chain: 3-methyl-2-oxobutanoate hydroxymethyltransferase (282 aa).

Residues aspartate 63 and aspartate 102 each contribute to the Mg(2+) site. 3-methyl-2-oxobutanoate is bound by residues 63–64, aspartate 102, and lysine 132; that span reads DS. Glutamate 134 lines the Mg(2+) pocket. Residue glutamate 200 is the Proton acceptor of the active site.

It belongs to the PanB family. As to quaternary structure, homodecamer; pentamer of dimers. Requires Mg(2+) as cofactor.

It localises to the cytoplasm. It catalyses the reaction 3-methyl-2-oxobutanoate + (6R)-5,10-methylene-5,6,7,8-tetrahydrofolate + H2O = 2-dehydropantoate + (6S)-5,6,7,8-tetrahydrofolate. Its pathway is cofactor biosynthesis; (R)-pantothenate biosynthesis; (R)-pantoate from 3-methyl-2-oxobutanoate: step 1/2. In terms of biological role, catalyzes the reversible reaction in which hydroxymethyl group from 5,10-methylenetetrahydrofolate is transferred onto alpha-ketoisovalerate to form ketopantoate. In Mycobacterium sp. (strain JLS), this protein is 3-methyl-2-oxobutanoate hydroxymethyltransferase.